We begin with the raw amino-acid sequence, 140 residues long: Large ribosomal subunit protein bL17 (140 aa).

Belongs to the bacterial ribosomal protein bL17 family. In terms of assembly, part of the 50S ribosomal subunit. Contacts protein L32.

This is Large ribosomal subunit protein bL17 from Hyphomonas neptunium (strain ATCC 15444).